Reading from the N-terminus, the 549-residue chain is Tegument protein (549 aa).

Disordered stretches follow at residues 50–92 (KKKA…TASP), 353–391 (ETGD…CSSY), and 523–542 (TPIK…TRSP). Polar residues-rich tracts occupy residues 75 to 84 (PQALSVPSLS) and 356 to 369 (DCSS…QTHR). A compositionally biased stretch (low complexity) spans 523–534 (TPIKTTSSSSPR).

Its function is as follows. This viral structural protein may have important functions, such as protein kinase activity, DNA binding, and possible transcriptional activation of immediate-early genes. This Homo sapiens (Human) protein is Tegument protein.